Reading from the N-terminus, the 205-residue chain is LexA repressor (205 aa).

The H-T-H motif DNA-binding region spans 28 to 48 (RAELMRAFDFRSPNAAESHLR). Active-site for autocatalytic cleavage activity residues include Ser-120 and Lys-159.

This sequence belongs to the peptidase S24 family. In terms of assembly, homodimer.

It carries out the reaction Hydrolysis of Ala-|-Gly bond in repressor LexA.. Functionally, represses a number of genes involved in the response to DNA damage (SOS response), including recA and lexA. In the presence of single-stranded DNA, RecA interacts with LexA causing an autocatalytic cleavage which disrupts the DNA-binding part of LexA, leading to derepression of the SOS regulon and eventually DNA repair. The polypeptide is LexA repressor (Acidithiobacillus ferrooxidans (strain ATCC 23270 / DSM 14882 / CIP 104768 / NCIMB 8455) (Ferrobacillus ferrooxidans (strain ATCC 23270))).